The chain runs to 331 residues: 6-phosphogluconolactonase (331 aa).

Belongs to the cycloisomerase 2 family.

It carries out the reaction 6-phospho-D-glucono-1,5-lactone + H2O = 6-phospho-D-gluconate + H(+). It functions in the pathway carbohydrate degradation; pentose phosphate pathway; D-ribulose 5-phosphate from D-glucose 6-phosphate (oxidative stage): step 2/3. In terms of biological role, catalyzes the hydrolysis of 6-phosphogluconolactone to 6-phosphogluconate. This Sodalis glossinidius (strain morsitans) protein is 6-phosphogluconolactonase.